Consider the following 345-residue polypeptide: Fe(3+) ions import ATP-binding protein FbpC (345 aa).

Residues L3–L233 form the ABC transporter domain. An ATP-binding site is contributed by G35 to S42.

Belongs to the ABC transporter superfamily. Fe(3+) ion importer (TC 3.A.1.10) family. In terms of assembly, the complex is composed of two ATP-binding proteins (FbpC), two transmembrane proteins (FbpB) and a solute-binding protein (FbpA).

The protein localises to the cell membrane. The enzyme catalyses Fe(3+)(out) + ATP + H2O = Fe(3+)(in) + ADP + phosphate + H(+). In terms of biological role, part of the ABC transporter complex FbpABC involved in Fe(3+) ions import. Responsible for energy coupling to the transport system. This Streptomyces avermitilis (strain ATCC 31267 / DSM 46492 / JCM 5070 / NBRC 14893 / NCIMB 12804 / NRRL 8165 / MA-4680) protein is Fe(3+) ions import ATP-binding protein FbpC.